The sequence spans 445 residues: Xylose isomerase (445 aa).

Residues His107 and Asp110 contribute to the active site. The Mg(2+) site is built by Glu238, Glu274, His277, Asp302, Asp313, Asp315, and Asp345.

The protein belongs to the xylose isomerase family. In terms of assembly, homotetramer. Mg(2+) is required as a cofactor.

The protein localises to the cytoplasm. The catalysed reaction is alpha-D-xylose = alpha-D-xylulofuranose. This chain is Xylose isomerase, found in Bacillus cereus (strain ATCC 10987 / NRS 248).